Reading from the N-terminus, the 450-residue chain is MEQDKYLTVAAITKYIEKKFEVDPYMKQVFVRGEISNLKQPASGHLYFTVKDEFAMLRSVMFHKAVQKIGFVPEDGMNVLVTGRIGVFTKAGRYQFYAEHMEPDGVGALYIQLEQLKAQLEKEGLFAETHKKVLPSFPSKVAVVTSKTGAAVRDILTTIHRRMPSVEVIVYPTIVQGEKAAQKIVENIGKINQRNDIDVMIIGRGGGSLEELWAFNEEPVVRAVYDSDVPVISAVGHETDFALSDFSADVRAATPTAAAELAVPDYRDLEERLAERKYRLLAVTRQALERKERSLEQLKQHLILNGPKHQLEQQMERTDYFSERLNNAFSKQIFVKQTAFDRLNDRLHYYHPNKEIELQKEQMTLHLQALDKAMKQLLKDKQQSFFRQVDALEHLSPLSLLKRGFGVTYKENTLVKSVQELEVGDNIQVKMQGGHIDALITAKEEDISGN.

It belongs to the XseA family. In terms of assembly, heterooligomer composed of large and small subunits.

Its subcellular location is the cytoplasm. It carries out the reaction Exonucleolytic cleavage in either 5'- to 3'- or 3'- to 5'-direction to yield nucleoside 5'-phosphates.. Functionally, bidirectionally degrades single-stranded DNA into large acid-insoluble oligonucleotides, which are then degraded further into small acid-soluble oligonucleotides. The sequence is that of Exodeoxyribonuclease 7 large subunit from Listeria monocytogenes serovar 1/2a (strain ATCC BAA-679 / EGD-e).